The primary structure comprises 475 residues: 7-dehydrocholesterol reductase (475 aa).

A disordered region spans residues 1-21 (MAAKSQPSAPKTKSTSGLTNG). Residue Ser-14 is modified to Phosphoserine. Transmembrane regions (helical) follow at residues 40 to 60 (LASV…FIMA), 151 to 173 (WLLT…PTII), 178 to 200 (IPLL…VKGY), 266 to 286 (VTNS…DFFW), 306 to 326 (LGWG…LYLV), and 331 to 351 (QLPT…YYIF). Residues Lys-358, Arg-362, Leu-395, Trp-400, and 407 to 408 (NY) each bind NADP(+). Residues 420 to 440 (LACGGGHLLPYFYIIFMAILL) traverse the membrane as a helical segment. Residues Asp-447, 451–455 (CANKY), and Tyr-462 contribute to the NADP(+) site.

Belongs to the ERG4/ERG24 family. As to quaternary structure, interacts with DHCR24; this interaction regulates DHCR7 activity. Interacts with TMEM147.

The protein localises to the endoplasmic reticulum membrane. It catalyses the reaction cholesterol + NADP(+) = 7-dehydrocholesterol + NADPH + H(+). The enzyme catalyses 7-dehydrodesmosterol + NADPH + H(+) = desmosterol + NADP(+). The catalysed reaction is 5,6alpha-epoxy-5alpha-cholestan-3beta-ol + H2O = 5alpha-cholestane-3beta,5,6beta-triol. It carries out the reaction 5,6beta-epoxy-5beta-cholestan-3beta-ol + H2O = 5alpha-cholestane-3beta,5,6beta-triol. The protein operates within steroid biosynthesis; cholesterol biosynthesis. Functionally, oxidoreductase that catalyzes the last step of the cholesterol synthesis pathway, which transforms cholesta-5,7-dien-3beta-ol (7-dehydrocholesterol,7-DHC) into cholesterol by reducing the C7-C8 double bond of its sterol core. Can also metabolize cholesta-5,7,24-trien-3beta-ol (7-dehydrodemosterol, 7-DHD) to desmosterol, which is then metabolized by the Delta(24)-sterol reductase (DHCR24) to cholesterol. Modulates ferroptosis (a form of regulated cell death driven by iron-dependent lipid peroxidation) through the metabolic breakdown of the anti-ferroptotic metabolites 7-DHC and 7-DHD which, when accumulated, divert the propagation of peroxyl radical-mediated damage from phospholipid components to its sterol core, protecting plasma and mitochondrial membranes from phospholipid autoxidation. Component of the microsomal antiestrogen binding site (AEBS), a multiproteic complex at the ER membrane that consists of an association between cholestenol Delta-isomerase/EBP and DHCR7. This complex is responsible for cholesterol-5,6-epoxide hydrolase (ChEH) activity, which consists in the hydration of cholesterol-5,6-epoxides (5,6-EC) into cholestane-3beta,5alpha,6beta-triol (CT). The precise role of each component of this complex has not been described yet. This chain is 7-dehydrocholesterol reductase (DHCR7), found in Bos taurus (Bovine).